We begin with the raw amino-acid sequence, 248 residues long: Ubiquinone biosynthesis O-methyltransferase (248 aa).

Residues R41, G72, D93, and M136 each contribute to the S-adenosyl-L-methionine site.

Belongs to the methyltransferase superfamily. UbiG/COQ3 family.

It catalyses the reaction a 3-demethylubiquinol + S-adenosyl-L-methionine = a ubiquinol + S-adenosyl-L-homocysteine + H(+). The enzyme catalyses a 3-(all-trans-polyprenyl)benzene-1,2-diol + S-adenosyl-L-methionine = a 2-methoxy-6-(all-trans-polyprenyl)phenol + S-adenosyl-L-homocysteine + H(+). Its pathway is cofactor biosynthesis; ubiquinone biosynthesis. O-methyltransferase that catalyzes the 2 O-methylation steps in the ubiquinone biosynthetic pathway. The sequence is that of Ubiquinone biosynthesis O-methyltransferase from Rhizobium etli (strain ATCC 51251 / DSM 11541 / JCM 21823 / NBRC 15573 / CFN 42).